Here is a 735-residue protein sequence, read N- to C-terminus: Transmembrane channel-like protein 7 (735 aa).

Residues 1–164 lie on the Extracellular side of the membrane; sequence MSEFGAGAEL…QSYFSFLRFL (164 aa). A helical membrane pass occupies residues 165-185; the sequence is VLLNFLMFILMFSFVTLPAVI. Topologically, residues 186 to 233 are cytoplasmic; that stretch reads SNYGIFNSSSTKISPNNTEPYCTVYTPSGNKGLVYFYTYLKDLLTGTG. Residues 234 to 254 form a helical membrane-spanning segment; sequence FLEVTVLFYGYYTIDAAWFSV. Residues 255–258 lie on the Extracellular side of the membrane; it reads LRYN. The helical transmembrane segment at 259–279 threads the bilayer; that stretch reads LPLAYLLTTFAYLALSFVWII. Over 280 to 355 the chain is Cytoplasmic; it reads KRSVERFRQH…TMKEKLQIYS (76 aa). The helical transmembrane segment at 356-376 threads the bilayer; that stretch reads LRIFINIIVIAVLSGCFYSIY. Residues 377–403 are Extracellular-facing; it reads RATVFSQENSSVSIRRNVMIANLLVQY. An N-linked (GlcNAc...) asparagine glycan is attached at asparagine 385. The chain crosses the membrane as a helical span at residues 404–424; that stretch reads LPSIVITSANFIAPQIFSFLI. Over 425–436 the chain is Cytoplasmic; it reads RFEDYSAAFEIR. Residues 437 to 457 form a helical membrane-spanning segment; sequence LTLIRCVFVRLANVGVLLFSL. The Extracellular segment spans residues 458-488; the sequence is WSQIHCDNDQCKACGYDYELYPCWESAVGQE. A helical membrane pass occupies residues 489–509; sequence MYKLLIFDFMIIIAMTLFVDF. Residues 510–548 are Cytoplasmic-facing; the sequence is PRKLLVTYCSWKLVQWWGLQEFGISDNVLEIIYGQTICW. A helical membrane pass occupies residues 549 to 569; that stretch reads IGTFFSPLLPAIATIKYFIIF. Residues 570–594 lie on the Extracellular side of the membrane; that stretch reads YIKKISLIHTRKPASRPIRASSSNF. The helical transmembrane segment at 595–615 threads the bilayer; the sequence is FFLAVLLIGLILAFVPLGVSI. The Cytoplasmic segment spans residues 616 to 634; sequence ALISSSKACGPFRNFNTSW. A helical transmembrane segment spans residues 635–655; it reads AIVPYTILEFPIGLQKFLYGI. Over 656–658 the chain is Extracellular; that stretch reads ASE. A helical membrane pass occupies residues 659–679; it reads AFAVPFFVIACLFMFYFIALA. Over 680-735 the chain is Cytoplasmic; that stretch reads GAHKRVVEQLREQLVTESRDKLFLLEKLSEAQKNSGKPQKARKLTSSWLLEPLDKG. The segment at 710–735 is disordered; that stretch reads AQKNSGKPQKARKLTSSWLLEPLDKG.

It belongs to the TMC family.

It localises to the membrane. In terms of biological role, probable component of an ion channel. The polypeptide is Transmembrane channel-like protein 7 (Tmc7) (Gallus gallus (Chicken)).